A 215-amino-acid polypeptide reads, in one-letter code: tRNA (guanine-N(7)-)-methyltransferase (215 aa).

Positions 44, 69, 96, and 118 each coordinate S-adenosyl-L-methionine. Residue Asp118 is part of the active site. Residues Lys122, Asp154, and Thr192–Glu195 contribute to the substrate site.

This sequence belongs to the class I-like SAM-binding methyltransferase superfamily. TrmB family.

The catalysed reaction is guanosine(46) in tRNA + S-adenosyl-L-methionine = N(7)-methylguanosine(46) in tRNA + S-adenosyl-L-homocysteine. It participates in tRNA modification; N(7)-methylguanine-tRNA biosynthesis. Catalyzes the formation of N(7)-methylguanine at position 46 (m7G46) in tRNA. This Levilactobacillus brevis (strain ATCC 367 / BCRC 12310 / CIP 105137 / JCM 1170 / LMG 11437 / NCIMB 947 / NCTC 947) (Lactobacillus brevis) protein is tRNA (guanine-N(7)-)-methyltransferase.